Reading from the N-terminus, the 785-residue chain is Protein SEY1 (785 aa).

The segment at 1–31 (MASAAPINLRAQDTPYVPPTSLPTSSSQTGS) is disordered. At 1–689 (MASAAPINLR…KRSTVASIAQ (689 aa)) the chain is on the cytoplasmic side. Positions 22–31 (LPTSSSQTGS) are enriched in low complexity. A GB1/RHD3-type G domain is found at 61–281 (GFSYNIVAVF…SSDYLFKPAY (221 aa)). A GTP-binding site is contributed by 71-78 (GSQSTGKS). Residues 458 to 482 (SWEEELELLRDEIRAVADQCRKDET) adopt a coiled-coil conformation. A helical transmembrane segment spans residues 690 to 710 (IPYWIYGVLVVLGWNEAMLVL). Topologically, residues 711–713 (FNP) are lumenal. Residues 714–734 (LYFAFLLLAMATSYIIAQLGL) form a helical membrane-spanning segment. The Cytoplasmic portion of the chain corresponds to 735–785 (VGPLFQVTRTVGSEIQRQATARLREHFSQPVLAEPVQVGPSRDREEVGQIQ).

It belongs to the TRAFAC class dynamin-like GTPase superfamily. GB1/RHD3 GTPase family. RHD3 subfamily.

It localises to the endoplasmic reticulum membrane. Its function is as follows. Cooperates with the reticulon proteins and tubule-shaping DP1 family proteins to generate and maintain the structure of the tubular endoplasmic reticulum network. Has GTPase activity, which is required for its function in ER organization. The protein is Protein SEY1 of Laccaria bicolor (strain S238N-H82 / ATCC MYA-4686) (Bicoloured deceiver).